The primary structure comprises 218 residues: Glutathione S-transferase Mu 2 (218 aa).

Positions 2–88 constitute a GST N-terminal domain; sequence PIILGYWNIR…YIARKHNLCG (87 aa). 7-8 serves as a coordination point for glutathione; it reads YW. Serine 27 and serine 44 each carry phosphoserine. Glutathione contacts are provided by residues 43–46, lysine 50, 59–60, and 72–73; these read RSQW, NL, and QS. Residues 90–208 enclose the GST C-terminal domain; that stretch reads TEKEKIQEDI…KSSRFLPRPV (119 aa). Tyrosine 116 contacts substrate.

Belongs to the GST superfamily. Mu family. In terms of assembly, homodimer.

It is found in the cytoplasm. The catalysed reaction is RX + glutathione = an S-substituted glutathione + a halide anion + H(+). It carries out the reaction 11(S)-hydroxy-14(S),15(S)-epoxy-(5Z,8Z,12E)-eicosatrienoate + glutathione = (11S,15S)-dihydroxy-14(R)-S-glutathionyl-(5Z,8Z,12E)-eicosatrienoate. Its function is as follows. Conjugation of reduced glutathione to a wide number of exogenous and endogenous hydrophobic electrophiles. Participates in the formation of novel hepoxilin regioisomers. The polypeptide is Glutathione S-transferase Mu 2 (GSTM2) (Pongo abelii (Sumatran orangutan)).